A 422-amino-acid polypeptide reads, in one-letter code: m7GpppN-mRNA hydrolase (422 aa).

One can recognise a Nudix hydrolase domain in the interval 95–226 (MGVPTYGAII…KLGLAPNKFF (132 aa)). Residues 129-150 (GKVNKEEAPHDCAAREVFEETG) carry the Nudix box motif. Mn(2+) contacts are provided by glutamate 144 and glutamate 148. Serine 246, serine 247, serine 249, serine 276, and serine 284 each carry phosphoserine. The disordered stretch occupies residues 247–347 (SDSDNGFSSA…GVHGQPAKQQ (101 aa)). Over residues 249-258 (SDNGFSSAGS) the composition is skewed to low complexity. Residues 303–312 (NHGEVSDLLK) are compositionally biased toward basic and acidic residues.

Belongs to the Nudix hydrolase family. DCP2 subfamily. Found in a mRNA decay complex with LSM1, LSM3, LSM4, EXOSC2, EXOSC4, EXOSC10, PARN, XRN1, CNOT6, UPF1, UPF2 and UPF3B. Forms a complex with DCP1A, EDC3, DDX6 and EDC4/HEDLS, within this complex directly interacts with EDC4/HEDLS. Interacts with DPC1B, UPF1, UPF2 and UPF3B. Associates with polysomes. Interacts (via N-terminus and C-terminus) with TRIM21 (via N-terminus and C-terminus). Interacts with LIMD1, WTIP and AJUBA. Interacts with DDX17 in an RNA-dependent manner. Interacts with ZC3HAV1. Interacts with APOBEC3G in an RNA-dependent manner. Interacts with ZFP36L1 (via N-terminus). Interacts with NBDY. Requires Mn(2+) as cofactor. It depends on Mg(2+) as a cofactor. As to expression, strongly expressed in brain and testis. Weakly expressed in lung. Not detected in heart, liver, kidney and muscle (at protein level).

The protein localises to the cytoplasm. Its subcellular location is the P-body. It localises to the nucleus. The enzyme catalyses a 5'-end (N(7)-methyl 5'-triphosphoguanosine)-ribonucleoside in mRNA + H2O = N(7)-methyl-GDP + a 5'-end phospho-ribonucleoside in mRNA + 2 H(+). In terms of biological role, decapping metalloenzyme that catalyzes the cleavage of the cap structure on mRNAs. Removes the 7-methyl guanine cap structure from mRNA molecules, yielding a 5'-phosphorylated mRNA fragment and 7m-GDP. Necessary for the degradation of mRNAs, both in normal mRNA turnover and in nonsense-mediated mRNA decay. Plays a role in replication-dependent histone mRNA degradation. Has higher activity towards mRNAs that lack a poly(A) tail. Has no activity towards a cap structure lacking an RNA moiety. The presence of a N(6)-methyladenosine methylation at the second transcribed position of mRNAs (N(6),2'-O-dimethyladenosine cap; m6A(m)) provides resistance to DCP2-mediated decapping. Blocks autophagy in nutrient-rich conditions by repressing the expression of ATG-related genes through degradation of their transcripts. This chain is m7GpppN-mRNA hydrolase (Dcp2), found in Mus musculus (Mouse).